The following is a 348-amino-acid chain: 4-hydroxy-2-oxovalerate aldolase 1 (348 aa).

Positions 8-260 (ITVHDMTLRD…QTGVDVWAIQ (253 aa)) constitute a Pyruvate carboxyltransferase domain. 16 to 17 (RD) serves as a coordination point for substrate. Mn(2+) is bound at residue aspartate 17. Histidine 20 (proton acceptor) is an active-site residue. Positions 170 and 199 each coordinate substrate. The Mn(2+) site is built by histidine 199 and histidine 201. Tyrosine 290 is a binding site for substrate.

Belongs to the 4-hydroxy-2-oxovalerate aldolase family.

The enzyme catalyses (S)-4-hydroxy-2-oxopentanoate = acetaldehyde + pyruvate. The polypeptide is 4-hydroxy-2-oxovalerate aldolase 1 (Cupriavidus metallidurans (strain ATCC 43123 / DSM 2839 / NBRC 102507 / CH34) (Ralstonia metallidurans)).